The sequence spans 89 residues: Large ribosomal subunit protein eL34 (89 aa).

Residues 1–29 (MSAPRFRNGTFKRTLKRVPGGRKVEHYKK) form a disordered region. Residues 13-29 (RTLKRVPGGRKVEHYKK) are compositionally biased toward basic residues.

The protein belongs to the eukaryotic ribosomal protein eL34 family.

The chain is Large ribosomal subunit protein eL34 from Methanosphaera stadtmanae (strain ATCC 43021 / DSM 3091 / JCM 11832 / MCB-3).